The sequence spans 428 residues: Histidinol dehydrogenase (428 aa).

The NAD(+) site is built by Tyr-126, Gln-188, and Asn-211. The substrate site is built by Ser-234, Gln-256, and His-259. Zn(2+) contacts are provided by Gln-256 and His-259. Residues Glu-324 and His-325 each act as proton acceptor in the active site. Substrate contacts are provided by His-325, Asp-358, Glu-412, and His-417. Asp-358 is a binding site for Zn(2+). Residue His-417 participates in Zn(2+) binding.

Belongs to the histidinol dehydrogenase family. Zn(2+) serves as cofactor.

It catalyses the reaction L-histidinol + 2 NAD(+) + H2O = L-histidine + 2 NADH + 3 H(+). It functions in the pathway amino-acid biosynthesis; L-histidine biosynthesis; L-histidine from 5-phospho-alpha-D-ribose 1-diphosphate: step 9/9. Functionally, catalyzes the sequential NAD-dependent oxidations of L-histidinol to L-histidinaldehyde and then to L-histidine. The sequence is that of Histidinol dehydrogenase from Chlorobium chlorochromatii (strain CaD3).